Here is a 521-residue protein sequence, read N- to C-terminus: Glucosidase 2 subunit beta (521 aa).

The N-terminal stretch at 1 to 14 (MLLLLLLLLPLCWA) is a signal peptide. Ser-24 is modified (phosphoserine). LDL-receptor class A domains are found at residues 37–71 (FTCL…AACP) and 69–113 (ACPN…TVCE). 2 disulfide bridges follow: Cys-39–Cys-58 and Cys-56–Cys-70. Asp-49 contacts substrate. The Ca(2+) site is built by Gln-50, Asp-53, Tyr-55, Asp-57, Asp-63, and Glu-64. Asp-53 lines the substrate pocket. A glycan (N-linked (GlcNAc...) asparagine) is linked at Asn-72. Cystine bridges form between Cys-77–Cys-99, Cys-97–Cys-112, and Cys-100–Cys-116. Position 89 is a phosphoserine; by PKC (Ser-89). Residues Arg-91, Asp-94, Val-96, Asp-98, Asp-104, and Glu-105 each coordinate Ca(2+). Lys-166 carries the N6-succinyllysine modification. Ser-168 is subject to Phosphoserine. 2 consecutive EF-hand domains span residues 209–244 (REQE…DTDG) and 245–290 (DGAL…TDIP). Residues Asp-222, Asn-224, Asp-226, Met-228, and Glu-233 each contribute to the Ca(2+) site. Disordered stretches follow at residues 226 to 267 (DGMV…DTTS) and 280 to 350 (YRSE…EKMP). Composition is skewed to acidic residues over residues 241–253 (DTDG…EEEA) and 308–331 (TEEE…EEEA). Positions 332–343 (PPPLQPPQPPSP) are enriched in pro residues. Ser-376 and Ser-383 each carry phosphoserine; by PKC. Positions 406–507 (SQCYELTTNE…ELMTPAACPE (102 aa)) constitute an MRH domain. A disulfide bond links Cys-408 and Cys-421. The residue at position 427 (Ser-427) is a Phosphoserine; by PKC. 2 disulfide bridges follow: Cys-464–Cys-493 and Cys-478–Cys-505. Asn-469 is a glycosylation site (N-linked (GlcNAc...) asparagine). The Prevents secretion from ER signature appears at 518–521 (HDEL).

As to quaternary structure, heterodimer of a catalytic alpha subunit (GANAB) and a beta subunit (PRKCSH). Binds glycosylated PTPRC. In terms of tissue distribution, expressed in kidney (at protein level).

The protein resides in the endoplasmic reticulum. Its pathway is glycan metabolism; N-glycan metabolism. In terms of biological role, regulatory subunit of glucosidase II that cleaves sequentially the 2 innermost alpha-1,3-linked glucose residues from the Glc(2)Man(9)GlcNAc(2) oligosaccharide precursor of immature glycoproteins. Required for efficient PKD1/Polycystin-1 biogenesis and trafficking to the plasma membrane of the primary cilia. The protein is Glucosidase 2 subunit beta of Mus musculus (Mouse).